The chain runs to 637 residues: Anthranilate synthase, phenazine specific (637 aa).

Residues 1 to 434 (MSQAAARLME…QRQQTQSDFS (434 aa)) form an anthranilate synthase component I region. The Glutamine amidotransferase type-1 domain occupies 437 to 628 (QVLIVDAEDT…LRHALIHTPV (192 aa)). Catalysis depends on for GATase activity residues C517, H602, and E604.

It carries out the reaction chorismate + L-glutamine = anthranilate + pyruvate + L-glutamate + H(+). The protein operates within antibiotic biosynthesis; phenazine biosynthesis. Its function is as follows. Involved in the biosynthesis of the antibiotic, phenazine, a nitrogen-containing heterocyclic molecule having important roles in virulence, competition and biological control. The chain is Anthranilate synthase, phenazine specific (phzE) from Pseudomonas fluorescens.